A 286-amino-acid polypeptide reads, in one-letter code: Protease HtpX (286 aa).

2 consecutive transmembrane segments (helical) span residues 4–24 and 33–53; these read ILLF…ILSL and TGLL…SLFL. Histidine 139 is a binding site for Zn(2+). Glutamate 140 is a catalytic residue. Residue histidine 143 participates in Zn(2+) binding. Helical transmembrane passes span 147 to 167 and 186 to 206; these read GDMV…IFVS and IYFL…SMIA. Glutamate 214 contributes to the Zn(2+) binding site.

Belongs to the peptidase M48B family. Requires Zn(2+) as cofactor.

The protein localises to the cell inner membrane. This is Protease HtpX from Pasteurella multocida (strain Pm70).